The sequence spans 180 residues: Large ribosomal subunit protein uL5c (180 aa).

It belongs to the universal ribosomal protein uL5 family. As to quaternary structure, part of the 50S ribosomal subunit; contacts the 5S rRNA.

It localises to the plastid. The protein resides in the chloroplast. In terms of biological role, binds 5S rRNA, forms part of the central protuberance of the 50S subunit. This Chlorella vulgaris (Green alga) protein is Large ribosomal subunit protein uL5c (rpl5).